The following is a 266-amino-acid chain: tRNA pseudouridine synthase A (266 aa).

The active-site Nucleophile is Asp52. Tyr113 lines the substrate pocket.

It belongs to the tRNA pseudouridine synthase TruA family. In terms of assembly, homodimer.

It catalyses the reaction uridine(38/39/40) in tRNA = pseudouridine(38/39/40) in tRNA. In terms of biological role, formation of pseudouridine at positions 38, 39 and 40 in the anticodon stem and loop of transfer RNAs. This Agrobacterium fabrum (strain C58 / ATCC 33970) (Agrobacterium tumefaciens (strain C58)) protein is tRNA pseudouridine synthase A.